Reading from the N-terminus, the 207-residue chain is Vascular endothelial growth factor B (207 aa).

The first 21 residues, 1–21, serve as a signal peptide directing secretion; that stretch reads MSPLLRRLLLAALLQLAPAQA. 3 cysteine pairs are disulfide-bonded: Cys47–Cys89, Cys78–Cys122, and Cys82–Cys124. Residues 122–139 are compositionally biased toward basic and acidic residues; that stretch reads CECRPKKKDSAVKPDRAA. Positions 122–207 are disordered; sequence CECRPKKKDS…AASSVAKGGA (86 aa). The span at 174–207 shows a compositional bias: low complexity; sequence PSAHAAPSTTSALTPGPAAAAADAAASSVAKGGA.

This sequence belongs to the PDGF/VEGF growth factor family. In terms of assembly, homodimer; disulfide-linked. Can also form heterodimer with VEGF. In terms of processing, VEGF-B186 is O-glycosylated. In terms of tissue distribution, expressed in all tissues except liver. Highest levels found in heart, skeletal muscle and pancreas.

Its subcellular location is the secreted. Functionally, growth factor for endothelial cells. VEGF-B167 binds heparin and neuropilin-1 whereas the binding to neuropilin-1 of VEGF-B186 is regulated by proteolysis. In Homo sapiens (Human), this protein is Vascular endothelial growth factor B (VEGFB).